We begin with the raw amino-acid sequence, 226 residues long: MKITFYGQNTLALKIGDIHVLVDPFITGNDLSKDKVDINDLKADYILLTHAHQDHILDAEAIAKNTGAVIVSNFEIANHYEEKGFEVHPMNHGGSWDFEFGKVKYVNAIHTSSFPDGSYGGQPGGFVIEGEHKNIYIAGDTALTMDMKLIPMHTKLDIAVLPIGDNFTMGINDAIIASDFIECDKIIGCHYDTFGYIEIDHEEAKKKFYEKGKDLMLLDIGESIEL.

This sequence belongs to the UPF0173 family.

The polypeptide is UPF0173 metal-dependent hydrolase GFO_2312 (Christiangramia forsetii (strain DSM 17595 / CGMCC 1.15422 / KT0803) (Gramella forsetii)).